The sequence spans 653 residues: Aspartate--tRNA ligase, mitochondrial (653 aa).

The N-terminal 46 residues, 1–46 (MYLGFWLSRLCRGLSRPIGKTMRPIWGSLSRNLALSSQRIPEFSSF), are a transit peptide targeting the mitochondrion. Phosphothreonine is present on T218. At S241 the chain carries Phosphoserine. The aspartate stretch occupies residues 243–246 (QQFK). Residue R265 coordinates L-aspartate. Residues 265–267 (RDE) and E534 contribute to the ATP site. L-aspartate is bound at residue R541. 583–586 (GLDR) is a binding site for ATP.

It belongs to the class-II aminoacyl-tRNA synthetase family. Type 1 subfamily. As to quaternary structure, homodimer.

Its subcellular location is the mitochondrion matrix. The protein resides in the mitochondrion membrane. The catalysed reaction is tRNA(Asp) + L-aspartate + ATP = L-aspartyl-tRNA(Asp) + AMP + diphosphate. In terms of biological role, catalyzes the attachment of aspartate to tRNA(Asp) in a two-step reaction: aspartate is first activated by ATP to form Asp-AMP and then transferred to the acceptor end of tRNA(Asp). The protein is Aspartate--tRNA ligase, mitochondrial (Dars2) of Mus musculus (Mouse).